The following is an 87-amino-acid chain: Small ribosomal subunit protein bS20 (87 aa).

The segment at 1–22 (MAHHKSALKRIKQNKRKQFRNK) is disordered.

Belongs to the bacterial ribosomal protein bS20 family.

Binds directly to 16S ribosomal RNA. This chain is Small ribosomal subunit protein bS20, found in Geobacter metallireducens (strain ATCC 53774 / DSM 7210 / GS-15).